Consider the following 184-residue polypeptide: MADDSKSSNVGSRYAQALFDLASEQKEVPAVEADLKSLKAAIADSRDLRVLLASPAFGADDKRKGLSAIADKAKFKPTTKKFLGLLAANGRAAALPEVISAFERLAAEARGAVSAEVTTALPLSSAQAKGLAQALRQALGKDPEITTRVDPALLGGIKVKVGSRLFDASLRSKLDSLKFALKRA.

It belongs to the ATPase delta chain family. As to quaternary structure, F-type ATPases have 2 components, F(1) - the catalytic core - and F(0) - the membrane proton channel. F(1) has five subunits: alpha(3), beta(3), gamma(1), delta(1), epsilon(1). F(0) has three main subunits: a(1), b(2) and c(10-14). The alpha and beta chains form an alternating ring which encloses part of the gamma chain. F(1) is attached to F(0) by a central stalk formed by the gamma and epsilon chains, while a peripheral stalk is formed by the delta and b chains.

It is found in the cell inner membrane. Its function is as follows. F(1)F(0) ATP synthase produces ATP from ADP in the presence of a proton or sodium gradient. F-type ATPases consist of two structural domains, F(1) containing the extramembraneous catalytic core and F(0) containing the membrane proton channel, linked together by a central stalk and a peripheral stalk. During catalysis, ATP synthesis in the catalytic domain of F(1) is coupled via a rotary mechanism of the central stalk subunits to proton translocation. Functionally, this protein is part of the stalk that links CF(0) to CF(1). It either transmits conformational changes from CF(0) to CF(1) or is implicated in proton conduction. The chain is ATP synthase subunit delta from Phenylobacterium zucineum (strain HLK1).